A 356-amino-acid polypeptide reads, in one-letter code: Phosphoserine aminotransferase (356 aa).

Arg41 contacts L-glutamate. Pyridoxal 5'-phosphate is bound by residues 76–77 (AS), Trp102, Thr150, Asp169, and Gln192. Lys193 is subject to N6-(pyridoxal phosphate)lysine. 234-235 (NT) serves as a coordination point for pyridoxal 5'-phosphate.

The protein belongs to the class-V pyridoxal-phosphate-dependent aminotransferase family. SerC subfamily. In terms of assembly, homodimer. It depends on pyridoxal 5'-phosphate as a cofactor.

It localises to the cytoplasm. It carries out the reaction O-phospho-L-serine + 2-oxoglutarate = 3-phosphooxypyruvate + L-glutamate. The enzyme catalyses 4-(phosphooxy)-L-threonine + 2-oxoglutarate = (R)-3-hydroxy-2-oxo-4-phosphooxybutanoate + L-glutamate. The protein operates within amino-acid biosynthesis; L-serine biosynthesis; L-serine from 3-phospho-D-glycerate: step 2/3. It participates in cofactor biosynthesis; pyridoxine 5'-phosphate biosynthesis; pyridoxine 5'-phosphate from D-erythrose 4-phosphate: step 3/5. Its function is as follows. Catalyzes the reversible conversion of 3-phosphohydroxypyruvate to phosphoserine and of 3-hydroxy-2-oxo-4-phosphonooxybutanoate to phosphohydroxythreonine. The chain is Phosphoserine aminotransferase from Flavobacterium johnsoniae (strain ATCC 17061 / DSM 2064 / JCM 8514 / BCRC 14874 / CCUG 350202 / NBRC 14942 / NCIMB 11054 / UW101) (Cytophaga johnsonae).